The chain runs to 510 residues: NEDD8-activating enzyme E1 regulatory subunit (510 aa).

An N-acetylalanine modification is found at alanine 2. N6-acetyllysine is present on residues lysine 6 and lysine 317. Residues 307 to 320 (DMIADSGKYIKLQN) form an interaction with UBA3 region.

It belongs to the ubiquitin-activating E1 family. ULA1 subfamily. In terms of assembly, heterodimer of UBA3 and NAE1. The complex binds NEDD8 and UBE2M. Binds APP and TP53BP2. In terms of processing, ubiquitinated by TRIP12, leading to its degradation by the proteasome.

It is found in the cell membrane. The protein operates within protein modification; protein neddylation. With respect to regulation, binding of TP53BP2 to the regulatory subunit NAE1 decreases neddylation activity. In terms of biological role, regulatory subunit of the dimeric UBA3-NAE1 E1 enzyme. E1 activates NEDD8 by first adenylating its C-terminal glycine residue with ATP, thereafter linking this residue to the side chain of the catalytic cysteine, yielding a NEDD8-UBA3 thioester and free AMP. E1 finally transfers NEDD8 to the catalytic cysteine of UBE2M. Necessary for cell cycle progression through the S-M checkpoint. Overexpression of NAE1 causes apoptosis through deregulation of NEDD8 conjugation. The covalent attachment of NEDD8 to target proteins is known as 'neddylation' and the process is involved in the regulation of cell growth, viability and development. The sequence is that of NEDD8-activating enzyme E1 regulatory subunit (NAE1) from Macaca fascicularis (Crab-eating macaque).